The sequence spans 269 residues: Tryptophan synthase alpha chain (269 aa).

Active-site proton acceptor residues include glutamate 56 and aspartate 67.

The protein belongs to the TrpA family. In terms of assembly, tetramer of two alpha and two beta chains.

It carries out the reaction (1S,2R)-1-C-(indol-3-yl)glycerol 3-phosphate + L-serine = D-glyceraldehyde 3-phosphate + L-tryptophan + H2O. Its pathway is amino-acid biosynthesis; L-tryptophan biosynthesis; L-tryptophan from chorismate: step 5/5. Functionally, the alpha subunit is responsible for the aldol cleavage of indoleglycerol phosphate to indole and glyceraldehyde 3-phosphate. The protein is Tryptophan synthase alpha chain of Mycobacterium ulcerans (strain Agy99).